The sequence spans 596 residues: Transketolase-like protein 1 (596 aa).

A substrate-binding site is contributed by His-46. Thiamine diphosphate-binding positions include Ser-49 and 94–96 (GWL). Asp-126 contributes to the Mg(2+) binding site. Gly-127 and Asn-156 together coordinate thiamine diphosphate. Asn-156 and Leu-158 together coordinate Mg(2+). The thiamine diphosphate site is built by Lys-218 and His-232. 3 residues coordinate substrate: His-232, Arg-292, and Ser-319. Positions 340 and 366 each coordinate thiamine diphosphate. The active-site Proton donor is the Glu-340. His-390 and Asp-398 together coordinate substrate. Gln-402 is a thiamine diphosphate binding site. Arg-448 is a substrate binding site.

The protein belongs to the transketolase family. As to quaternary structure, homodimer. The cofactor is Mg(2+). Ca(2+) is required as a cofactor. Mn(2+) serves as cofactor. It depends on Co(2+) as a cofactor. Requires thiamine diphosphate as cofactor. Widely expressed. Expressed in endothelial cells and in peripheral neurons (at protein level). As to expression, not expressed in fetal neocortex. In terms of tissue distribution, expressed in fetal neocortex.

It localises to the cytoplasm. It carries out the reaction D-sedoheptulose 7-phosphate + D-glyceraldehyde 3-phosphate = aldehydo-D-ribose 5-phosphate + D-xylulose 5-phosphate. In terms of biological role, catalyzes the transfer of a two-carbon ketol group from a ketose donor to an aldose acceptor, via a covalent intermediate with the cofactor thiamine pyrophosphate. During fetal neocortex development, may be essential to maintain the full number of basal radial glia (bRG). bRG are neural progenitor cells that undergo asymmetric divisions, generating a bRG (self-renewal) and a neuron, in contrast to basal intermediate progenitors (bIPs), which typically divide once to give rise to 2 neurons. bRG generate more cortical neurons over time than bIPs. In Homo sapiens (Human), this protein is Transketolase-like protein 1 (TKTL1).